We begin with the raw amino-acid sequence, 267 residues long: Tetrahydromethanopterin S-methyltransferase subunit C (267 aa).

7 consecutive transmembrane segments (helical) span residues 19-39 (IMAIGAIGGLAGIYLGNFMPA), 40-60 (QFSFFGGLGAICAMVWGADAV), 75-95 (IGMISLGMGIVAALFGLSVGG), 96-116 (IAGPIVSFIAAAIIGAVIGVL), 131-151 (AMVEIAGAGTLVIIGLSVVIA), 162-182 (YVVANGYIALIFIIGGMGILH), and 221-241 (GLMAAGLNIAVGVIIWAWAFM).

It belongs to the MtrC family. As to quaternary structure, the complex is composed of 8 subunits; MtrA, MtrB, MtrC, MtrD, MtrE, MtrF, MtrG and MtrH.

The protein resides in the cell membrane. It catalyses the reaction 5-methyl-5,6,7,8-tetrahydromethanopterin + coenzyme M + 2 Na(+)(in) = 5,6,7,8-tetrahydromethanopterin + methyl-coenzyme M + 2 Na(+)(out). Its pathway is one-carbon metabolism; methanogenesis from CO(2); methyl-coenzyme M from 5,10-methylene-5,6,7,8-tetrahydromethanopterin: step 2/2. Part of a complex that catalyzes the formation of methyl-coenzyme M and tetrahydromethanopterin from coenzyme M and methyl-tetrahydromethanopterin. This is an energy-conserving, sodium-ion translocating step. The polypeptide is Tetrahydromethanopterin S-methyltransferase subunit C (Methanosarcina acetivorans (strain ATCC 35395 / DSM 2834 / JCM 12185 / C2A)).